The chain runs to 175 residues: Methylated-DNA--protein-cysteine methyltransferase (175 aa).

The active-site Nucleophile; methyl group acceptor is C142.

Belongs to the MGMT family.

It localises to the cytoplasm. It carries out the reaction a 6-O-methyl-2'-deoxyguanosine in DNA + L-cysteinyl-[protein] = S-methyl-L-cysteinyl-[protein] + a 2'-deoxyguanosine in DNA. The enzyme catalyses a 4-O-methyl-thymidine in DNA + L-cysteinyl-[protein] = a thymidine in DNA + S-methyl-L-cysteinyl-[protein]. In terms of biological role, involved in the cellular defense against the biological effects of O6-methylguanine (O6-MeG) and O4-methylthymine (O4-MeT) in DNA. Repairs the methylated nucleobase in DNA by stoichiometrically transferring the methyl group to a cysteine residue in the enzyme. This is a suicide reaction: the enzyme is irreversibly inactivated. This Thermococcus sibiricus (strain DSM 12597 / MM 739) protein is Methylated-DNA--protein-cysteine methyltransferase.